Consider the following 374-residue polypeptide: Low-specificity L-threonine aldolase (374 aa).

The residue at position 213 (Lys213) is an N6-(pyridoxal phosphate)lysine. Positions 354–374 are disordered; it reads HPHKDDGRNNKKMYSLDAIKK.

It belongs to the threonine aldolase family. In terms of assembly, homotetramer. Pyridoxal 5'-phosphate is required as a cofactor.

The catalysed reaction is L-threonine = acetaldehyde + glycine. It catalyses the reaction L-allo-threonine = acetaldehyde + glycine. Its pathway is amino-acid degradation; L-threonine degradation via aldolase pathway; acetaldehyde and glycine from L-threonine: step 1/1. This Candida albicans (Yeast) protein is Low-specificity L-threonine aldolase (GLY1).